The following is a 420-amino-acid chain: MTICQFFLQGRCRFGDRCWNEHPGARGAGGARQPPPQQQPPSGNNRRGWNASSQRYSNVIQPSSFPKSTPWGGSRDQDKPPFGSFDSGASTSRGFGSSQNPFASPLSDEQKDEKKLLEGIVKDVEVWESSGQWMFSVYSPVRKKPNISGFTDISPEELRLEYHNFLTSNNLQSYLNSVQQLVSQWRNRINELKNLTMSTKGALLSDVKDGVSQAVPAFGFGSKQAGSFGSPGFPVNNSSSSTVQNFSFKTSPGLATPPSGSTSVFGSHPAFGAGPSAGSSISSSTPAFGLGKPEATSAASFSFKSPEASSFASPGFSGFPASMAASPSGSTTAPPLRSGSSVVGFGSPSPHSQAVFAKPSTDVFGGSGISTSVLASGAADNALFTPRDQLMKEELEQFQSQRFTLGKIPLKPPPVELLTV.

A C3H1-type zinc finger spans residues 1–25 (MTICQFFLQGRCRFGDRCWNEHPGA). An FG 1 repeat occupies 14–15 (FG). The interval 25–111 (ARGAGGARQP…FASPLSDEQK (87 aa)) is disordered. Over residues 42–67 (SGNNRRGWNASSQRYSNVIQPSSFPK) the composition is skewed to polar residues. FG repeat units lie at residues 82-83 (FG), 95-96 (FG), 218-219 (FG), 220-221 (FG), 228-229 (FG), 265-266 (FG), 271-272 (FG), 288-289 (FG), 345-346 (FG), and 364-365 (FG). Over residues 87–102 (SGASTSRGFGSSQNPF) the composition is skewed to polar residues. Residues 323–345 (MAASPSGSTTAPPLRSGSSVVGF) are disordered. The interaction with GLE1 stretch occupies residues 365-420 (GGSGISTSVLASGAADNALFTPRDQLMKEELEQFQSQRFTLGKIPLKPPPVELLTV).

In terms of assembly, probable component of the nuclear pore complex (NPC). Interacts with nuclear export protein NXF1. Interacts with GLE1. Able to form a heterotrimer with NUP155 and GLE1 in vitro. Interacts with XPO1. O-glycosylated.

The protein resides in the nucleus. It localises to the nuclear pore complex. It is found in the nucleus membrane. Functionally, required for the export of mRNAs containing poly(A) tails from the nucleus into the cytoplasm. The polypeptide is Nucleoporin NUP42 (Nup42) (Mus musculus (Mouse)).